A 90-amino-acid chain; its full sequence is DNA-binding protein HU (90 aa).

Belongs to the bacterial histone-like protein family. In terms of assembly, homodimer.

Functionally, histone-like DNA-binding protein which is capable of wrapping DNA to stabilize it, and thus to prevent its denaturation under extreme environmental conditions. The protein is DNA-binding protein HU (hup) of Pasteurella multocida (strain Pm70).